We begin with the raw amino-acid sequence, 361 residues long: Chorismate synthase (361 aa).

NADP(+)-binding residues include Arg48 and Arg54. Residues 125 to 127 (RSS), 238 to 239 (NA), Gly278, 293 to 297 (KPTSS), and Arg319 each bind FMN.

It belongs to the chorismate synthase family. Homotetramer. FMNH2 is required as a cofactor.

It catalyses the reaction 5-O-(1-carboxyvinyl)-3-phosphoshikimate = chorismate + phosphate. The protein operates within metabolic intermediate biosynthesis; chorismate biosynthesis; chorismate from D-erythrose 4-phosphate and phosphoenolpyruvate: step 7/7. Catalyzes the anti-1,4-elimination of the C-3 phosphate and the C-6 proR hydrogen from 5-enolpyruvylshikimate-3-phosphate (EPSP) to yield chorismate, which is the branch point compound that serves as the starting substrate for the three terminal pathways of aromatic amino acid biosynthesis. This reaction introduces a second double bond into the aromatic ring system. This Pectobacterium carotovorum subsp. carotovorum (strain PC1) protein is Chorismate synthase.